We begin with the raw amino-acid sequence, 273 residues long: NH(3)-dependent NAD(+) synthetase (273 aa).

47–54 (GISGGQDS) serves as a coordination point for ATP. Asp53 is a binding site for Mg(2+). Residue Arg139 coordinates deamido-NAD(+). Thr159 contacts ATP. A Mg(2+)-binding site is contributed by Glu164. Lys172 and Asp179 together coordinate deamido-NAD(+). ATP contacts are provided by Lys188 and Thr210. 259–260 (HK) serves as a coordination point for deamido-NAD(+).

This sequence belongs to the NAD synthetase family. In terms of assembly, homodimer.

The catalysed reaction is deamido-NAD(+) + NH4(+) + ATP = AMP + diphosphate + NAD(+) + H(+). Its pathway is cofactor biosynthesis; NAD(+) biosynthesis; NAD(+) from deamido-NAD(+) (ammonia route): step 1/1. Catalyzes the ATP-dependent amidation of deamido-NAD to form NAD. Uses ammonia as a nitrogen source. The protein is NH(3)-dependent NAD(+) synthetase of Staphylococcus aureus (strain N315).